A 247-amino-acid chain; its full sequence is ATP synthase subunit a, chloroplastic (247 aa).

A run of 5 helical transmembrane segments spans residues 38–58, 95–115, 134–154, 199–219, and 220–240; these read QVLI…VIAV, VPFI…GALL, INTT…AGLS, LVVV…VMFL, and GLFT…AYIG.

This sequence belongs to the ATPase A chain family. F-type ATPases have 2 components, CF(1) - the catalytic core - and CF(0) - the membrane proton channel. CF(1) has five subunits: alpha(3), beta(3), gamma(1), delta(1), epsilon(1). CF(0) has four main subunits: a, b, b' and c.

It localises to the plastid. Its subcellular location is the chloroplast thylakoid membrane. Key component of the proton channel; it plays a direct role in the translocation of protons across the membrane. The polypeptide is ATP synthase subunit a, chloroplastic (Lolium perenne (Perennial ryegrass)).